Reading from the N-terminus, the 36-residue chain is Defensin-like turtle egg white protein TEWP (36 aa).

Glutamine 1 bears the Pyrrolidone carboxylic acid mark. 3 disulfide bridges follow: cysteine 4/cysteine 30, cysteine 8/cysteine 29, and cysteine 12/cysteine 24.

It belongs to the beta-defensin family. Monomer. Detected in egg white (at protein level).

The protein resides in the secreted. Functionally, antibacterial and antiviral peptide. Has strong inhibitory activity towards E.coli and S.typhimurium. Has significant antiviral activity against Chandipura virus. This chain is Defensin-like turtle egg white protein TEWP, found in Caretta caretta (Loggerhead sea turtle).